A 210-amino-acid polypeptide reads, in one-letter code: CASP-like protein 3A2 (210 aa).

Residues 1–45 (MMMNGQKMAAAEVAVQLPESKMVTENIGGAAAAMRPFGRKAEVMN) are Cytoplasmic-facing. The helical transmembrane segment at 46–66 (VLLRVLCMVTSVAALSSMVTA) threads the bilayer. The Extracellular segment spans residues 67–92 (QQSSTVSIYGFMLPIQSKWSFSHSFE). A helical transmembrane segment spans residues 93–113 (YVVGVSAVVAAHSLLQLLISV). Over 114–128 (SRLLRKSPVIQSRSH) the chain is Cytoplasmic. The chain crosses the membrane as a helical span at residues 129 to 149 (AWLVFAGDQVFAYAMISAGAA). Over 150 to 178 (ASGVTNLNRTGIRHTALPNFCKPLQSFCD) the chain is Extracellular. Asparagine 157 carries an N-linked (GlcNAc...) asparagine glycan. The chain crosses the membrane as a helical span at residues 179–199 (HVAVSIFFTFLSCFLLAASAV). Topologically, residues 200-210 (QEVIWLSRSKY) are cytoplasmic.

The protein belongs to the Casparian strip membrane proteins (CASP) family. As to quaternary structure, homodimer and heterodimers.

Its subcellular location is the cell membrane. In Populus trichocarpa (Western balsam poplar), this protein is CASP-like protein 3A2.